We begin with the raw amino-acid sequence, 459 residues long: MKNAREIWRNVLSVIEEEERTPKASFDMWLKSTEGISLMGTTLVVSAPASFIVTWLERQYLSLLQDTVEEITNNKLEIHFIEESQAHKYAPADGSSNESIAVTETKEQPVLLPSKEEGDLGQLNDKYIFETFVIGSGNRFAHAASLAVAEAPARAYNPLFIYGGVGLGKTHLMHAIGHYVKGQKPGARIAYVSSEKFTNEFINSIRDNKTGEFRNRYRNIDVLLIDDIQFLAGKEQTQEEFFHTFNALHNDQKQIVISSDRPPKEIPTLEDRLRSRFEWGLITDITPPDLETRIAILRKKATAEGLDISNEVMLYIANQIDTNIRELEGALTRVVAYAKLVGRPIDPDVAAEALHNIMPVQEAKKIVIRDIQEVVGQHFNIQVEELNSKKRTKTLAFPRQIAMYLSREMTESSLPKIGEEFGGRDHTTVIHAHEKISTLLKNDVEMQETIQTLKKALSN.

The interval 1-83 (MKNAREIWRN…NKLEIHFIEE (83 aa)) is domain I, interacts with DnaA modulators. Positions 83–121 (ESQAHKYAPADGSSNESIAVTETKEQPVLLPSKEEGDLG) are domain II. A domain III, AAA+ region region spans residues 122–338 (QLNDKYIFET…GALTRVVAYA (217 aa)). ATP-binding residues include glycine 166, glycine 168, lysine 169, and threonine 170. The interval 339–459 (KLVGRPIDPD…IQTLKKALSN (121 aa)) is domain IV, binds dsDNA.

This sequence belongs to the DnaA family. Oligomerizes as a right-handed, spiral filament on DNA at oriC.

It is found in the cytoplasm. Plays an essential role in the initiation and regulation of chromosomal replication. ATP-DnaA binds to the origin of replication (oriC) to initiate formation of the DNA replication initiation complex once per cell cycle. Binds the DnaA box (a 9 base pair repeat at the origin) and separates the double-stranded (ds)DNA. Forms a right-handed helical filament on oriC DNA; dsDNA binds to the exterior of the filament while single-stranded (ss)DNA is stabiized in the filament's interior. The ATP-DnaA-oriC complex binds and stabilizes one strand of the AT-rich DNA unwinding element (DUE), permitting loading of DNA polymerase. After initiation quickly degrades to an ADP-DnaA complex that is not apt for DNA replication. Binds acidic phospholipids. In Exiguobacterium sp. (strain ATCC BAA-1283 / AT1b), this protein is Chromosomal replication initiator protein DnaA.